Here is a 314-residue protein sequence, read N- to C-terminus: MSDSLRIIFAGTPDFAARHLDALLSSGHQIVGVFTQPDRPAGRGNKLTPSPVKVLAEQHHLPVFQPKSLRPEENQHLVADLNADVMVVVAYGLILPKAVLDMPRLGCINVHGSLLPRWRGAAPIQRSLWAGDHETGVTIMQMDVGLDTGDMMHKIACPIEADDTSASLYDKLAQLGPQGMLTTLQQMAAGTAKREVQDESLVTYAEKLSKEEARLDWNLPAVQLERCVRAFNPWPVSYFTIDDQPVKVWQATVLAQNADAEPGTIIHADKHGIQVATAEGILNLTQLQPAGKKPMSAQDLLNSRREWFTPGNRL.

113-116 (SLLP) provides a ligand contact to (6S)-5,6,7,8-tetrahydrofolate.

It belongs to the Fmt family.

The enzyme catalyses L-methionyl-tRNA(fMet) + (6R)-10-formyltetrahydrofolate = N-formyl-L-methionyl-tRNA(fMet) + (6S)-5,6,7,8-tetrahydrofolate + H(+). In terms of biological role, attaches a formyl group to the free amino group of methionyl-tRNA(fMet). The formyl group appears to play a dual role in the initiator identity of N-formylmethionyl-tRNA by promoting its recognition by IF2 and preventing the misappropriation of this tRNA by the elongation apparatus. In Serratia proteamaculans (strain 568), this protein is Methionyl-tRNA formyltransferase.